Here is a 92-residue protein sequence, read N- to C-terminus: MARSLKKGPFVDDHLMNKMEKLVASEQKQVVKTWSRRSTIFPQFIGHTIAVYDGRKHVPVYITEDMVGHKLGEFAPTRTYKGHLADDKKTRR.

The protein belongs to the universal ribosomal protein uS19 family.

Its function is as follows. Protein S19 forms a complex with S13 that binds strongly to the 16S ribosomal RNA. In Bacillus mycoides (strain KBAB4) (Bacillus weihenstephanensis), this protein is Small ribosomal subunit protein uS19.